Reading from the N-terminus, the 282-residue chain is Epoxide hydrolase LasB (282 aa).

Positions 1 to 133 are lsd19A; sequence MPAETVRKEV…TDSSWTARPA (133 aa). Y14 lines the substrate pocket. Catalysis depends on D38, which acts as the Proton acceptor; for 5-exo epoxide-opening cyclization activity. 2 residues coordinate substrate: E65 and H146. Residues 134–282 are lsd19B; the sequence is PDEERRKELA…TDVSLLDPAA (149 aa). Catalysis depends on D170, which acts as the Proton acceptor; for 6-endo epoxide-opening cyclization activity. Substrate-binding residues include R177, E197, and Y251.

Its function is as follows. Epoxide hydrolase responsible for the double epoxide-opening cyclization of bisepoxyprelasalocid A to form lasalocid A, a polyether antibiotic. In vitro, accepts various substrate analogs differing in the left segment of lasalocid and epoxide stereochemistry to afford products with excellent regioselectivity. This chain is Epoxide hydrolase LasB (lsd19), found in Streptomyces lasalocidi (Streptomyces lasaliensis).